Here is a 111-residue protein sequence, read N- to C-terminus: uncharacterized protein (111 aa).

A helical membrane pass occupies residues 18 to 41 (FFYFFFISFYTLWIVFFLLHLSFF).

It localises to the membrane. This is an uncharacterized protein from Saccharomyces cerevisiae (strain ATCC 204508 / S288c) (Baker's yeast).